Reading from the N-terminus, the 291-residue chain is Inactive dihydropteroate synthase 2 (291 aa).

Residues 15–272 (QLIMAIVNRT…EVVATRRVLE (258 aa)) enclose the Pterin-binding domain.

It belongs to the DHPS family. Homodimer.

In terms of biological role, has very low affinity for the DHPS substrate 6-hydroxymethyl-7,8-dihydropterin-pyrophosphate, but can bind the inhibitor dapsone. Seems to lack dihydropteroate synthase activity, and does probably not function in folate metabolism. The sequence is that of Inactive dihydropteroate synthase 2 (folP2) from Mycobacterium leprae (strain TN).